A 284-amino-acid chain; its full sequence is UPF0276 protein PA3283 (284 aa).

This sequence belongs to the UPF0276 family.

The polypeptide is UPF0276 protein PA3283 (Pseudomonas aeruginosa (strain ATCC 15692 / DSM 22644 / CIP 104116 / JCM 14847 / LMG 12228 / 1C / PRS 101 / PAO1)).